Reading from the N-terminus, the 29-residue chain is Cytochrome b6-f complex subunit 8 (29 aa).

Residues 3-23 (ILTLGWVGLLGLFTYSIAMVV) form a helical membrane-spanning segment.

This sequence belongs to the PetN family. In terms of assembly, the 4 large subunits of the cytochrome b6-f complex are cytochrome b6, subunit IV (17 kDa polypeptide, PetD), cytochrome f and the Rieske protein, while the 4 small subunits are PetG, PetL, PetM and PetN. The complex functions as a dimer.

The protein localises to the cellular thylakoid membrane. Its function is as follows. Component of the cytochrome b6-f complex, which mediates electron transfer between photosystem II (PSII) and photosystem I (PSI), cyclic electron flow around PSI, and state transitions. The sequence is that of Cytochrome b6-f complex subunit 8 from Cyanothece sp. (strain PCC 7425 / ATCC 29141).